Consider the following 791-residue polypeptide: MVVHSLRLQDLIEEIRGAKTQAQEREVIQKECAQIRASFRDGDPLQRHRQLAKLLYVHMLGYPAHFGQMECLKLIASPRFTDKRVGYLGAMLLLDERHDSHLLITNSIKNDLSQGNQPVQGLALCTLSTMGSAEMCRDLAPEVEKLLLQPSPYVRKKAILTAVHMIRKDPELSGIFLPPCTKLLRERHHGIQLGTVTLITELCERNPAALRHFRKVVPQLVQILRTLVTTGYSTEHSISGVSDPFLQVQILRLLRILGRNHEESSETMNDLLAQVATNTDTSRNAGNAVLLETVLTIMAIHSAAGLRVLAVNILGRFLLNNDKNIRYVALTSLLQLVQSDHSAVQRHRSTVVECLQETDASLSRRALELSLALVNSSNVRAMMQELQAFLESCPPDLRADCASGILLAAERFAPSKRWHIDTILHVLTTAGAHVRDDAVANLTQLIGEAEELHTYSVRRLYSALAEDISQQPLVQVAAWCIGEYGDLLLEGNCEETEPFQVEEEDVLALLEKVLQSHMSLPATRGYAITALMKLSTRLRGDNNRIRQVVSIYGSCVDLELQQRAVEYNTLFQKYDHMRAAILEKMPLVERGDPHVKEGGKEKQTEAQPLEVTAPAPTEPQATKLLDLLDLLGDTSEPLSSGHAQHLPPQTPSPGEALIHLLDLPCTPPPPAPIPSVRVFEREGLQLDLSFMRPLETPALLLVTATTTNSSKEDVTHFVCQAAVPKSFQLQLQAPSGNTIPAQGGLPITQVFRILNPNQAPLRLKLRLTYNHSGQPVQEIFEVDNLPVETWQ.

The region spanning 671–786 is the GAE domain; it reads APIPSVRVFE…QEIFEVDNLP (116 aa).

The protein belongs to the adaptor complexes large subunit family. In terms of assembly, may interact with AP1S1/Sigma1A-adaptin and AP1S2/Sigma1B-adaptin. Probably does not interact with APB1. Interacts (via GAE domain) with RABEP1, NECAP1, CLINT1 and AFTPH/aftiphilin. Interacts with HBV major surface antigen L. Interacts with HBV core protein C in a ubiquitin-dependent manner. Binds ubiquitin. As to expression, widely expressed.

The protein localises to the golgi apparatus membrane. It localises to the cytoplasmic vesicle membrane. Its subcellular location is the endosome membrane. Functionally, may function in protein sorting in late endosomes or multivesucular bodies (MVBs). Involved in MVB-assisted maturation of hepatitis B virus (HBV). The sequence is that of AP-1 complex subunit gamma-like 2 (Ap1g2) from Mus musculus (Mouse).